A 527-amino-acid chain; its full sequence is Bifunctional purine biosynthesis protein PurH (527 aa).

The region spanning 8–156 (AGAKRPIRRA…KNHPSVAVVV (149 aa)) is the MGS-like domain.

It belongs to the PurH family.

It carries out the reaction (6R)-10-formyltetrahydrofolate + 5-amino-1-(5-phospho-beta-D-ribosyl)imidazole-4-carboxamide = 5-formamido-1-(5-phospho-D-ribosyl)imidazole-4-carboxamide + (6S)-5,6,7,8-tetrahydrofolate. It catalyses the reaction IMP + H2O = 5-formamido-1-(5-phospho-D-ribosyl)imidazole-4-carboxamide. Its pathway is purine metabolism; IMP biosynthesis via de novo pathway; 5-formamido-1-(5-phospho-D-ribosyl)imidazole-4-carboxamide from 5-amino-1-(5-phospho-D-ribosyl)imidazole-4-carboxamide (10-formyl THF route): step 1/1. The protein operates within purine metabolism; IMP biosynthesis via de novo pathway; IMP from 5-formamido-1-(5-phospho-D-ribosyl)imidazole-4-carboxamide: step 1/1. The polypeptide is Bifunctional purine biosynthesis protein PurH (Mycobacterium sp. (strain KMS)).